We begin with the raw amino-acid sequence, 60 residues long: Large ribosomal subunit protein bL32 (60 aa).

The span at 1–16 (MAVPKKKTSKSRKNMR) shows a compositional bias: basic residues. The segment at 1–20 (MAVPKKKTSKSRKNMRRAHD) is disordered.

This sequence belongs to the bacterial ribosomal protein bL32 family.

The protein is Large ribosomal subunit protein bL32 of Geobacter metallireducens (strain ATCC 53774 / DSM 7210 / GS-15).